Consider the following 86-residue polypeptide: Kappa-theraphotoxin-Cg1a 3 (86 aa).

The signal sequence occupies residues 1-21; it reads MKVSVLITLAVLGVMFVWASA. Positions 22–50 are excised as a propeptide; the sequence is AELEERGSDQRDSPAWLKSMERIFRSEER. 3 disulfides stabilise this stretch: Cys-52/Cys-66, Cys-59/Cys-71, and Cys-65/Cys-78. Position 84 is a phenylalanine amide (Phe-84).

Belongs to the neurotoxin 10 (Hwtx-1) family. 28 (Jztx-11) subfamily. Expressed by the venom gland.

It is found in the secreted. Its function is as follows. This toxin acts as a voltage-dependent gating-modifier. It inhibits the sodium conductance (IC(50)=124 nM) and slows the fast inactivation (EC(50)=1180 nM) of Nav1.5/SCN5A. It significantly shifts the activation to more depolarized voltages and decreases the deactivation of Nav1.5 currents upon extreme depolarization, but only slightly affects voltage-dependence of steady-state inactivation. In addition, this toxin causes an approximately five-fold decrease in the rate of recovery from inactivation and an approximately 1.9-fold reduction in the closed-state inactivation rate. This toxin integrates the functions of site 3 toxins (alpha-scorpion toxins) with site 4 toxins (beta-scorpion and spider toxins) by targeting multiple sites on Nav1.5. Also shows inhibition of voltage-gated potassium channels (5 uM completely inhibits Kv2.1/KCNB1, whereas 5 uM moderately inhibits Kv4.2/KCND2 Kv4.1/KCND1 channels). This is Kappa-theraphotoxin-Cg1a 3 from Chilobrachys guangxiensis (Chinese earth tiger tarantula).